The following is a 156-amino-acid chain: Small ribosomal subunit protein uS7c (156 aa).

The protein belongs to the universal ribosomal protein uS7 family. Part of the 30S ribosomal subunit.

It localises to the plastid. The protein resides in the chloroplast. Functionally, one of the primary rRNA binding proteins, it binds directly to 16S rRNA where it nucleates assembly of the head domain of the 30S subunit. This Cyanidium caldarium (Red alga) protein is Small ribosomal subunit protein uS7c (rps7).